The following is a 295-amino-acid chain: Nitrogenase iron protein (295 aa).

10–17 serves as a coordination point for ATP; sequence GKGGIGKS. Residue Cys98 coordinates [4Fe-4S] cluster. Arg101 is modified (ADP-ribosylarginine; by dinitrogenase reductase ADP-ribosyltransferase). Cys133 is a [4Fe-4S] cluster binding site.

The protein belongs to the NifH/BchL/ChlL family. As to quaternary structure, homodimer. Requires [4Fe-4S] cluster as cofactor. In terms of processing, the reversible ADP-ribosylation of Arg-101 inactivates the nitrogenase reductase and regulates nitrogenase activity.

The catalysed reaction is N2 + 8 reduced [2Fe-2S]-[ferredoxin] + 16 ATP + 16 H2O = H2 + 8 oxidized [2Fe-2S]-[ferredoxin] + 2 NH4(+) + 16 ADP + 16 phosphate + 6 H(+). Its function is as follows. The key enzymatic reactions in nitrogen fixation are catalyzed by the nitrogenase complex, which has 2 components: the iron protein and the molybdenum-iron protein. The chain is Nitrogenase iron protein from Tolumonas auensis (strain DSM 9187 / NBRC 110442 / TA 4).